We begin with the raw amino-acid sequence, 223 residues long: Glutathione S-transferase 4 (223 aa).

A2 bears the Blocked amino end (Ala) mark. The GST N-terminal domain occupies 4–85 (PAVKVYGWAI…HVLRKHKPEL (82 aa)). Residues S14, 43–44 (HR), 56–57 (KV), and 69–70 (ES) each bind glutathione. The GST C-terminal domain maps to 90–223 (RLEQTAMVDV…VGAGAPKEQE (134 aa)).

The protein belongs to the GST superfamily. Phi family. As to quaternary structure, homodimer or heterodimer of GST-I and GST-IV (=GST-II). In terms of tissue distribution, seedling roots.

The enzyme catalyses RX + glutathione = an S-substituted glutathione + a halide anion + H(+). In terms of biological role, conjugation of reduced glutathione to a wide number of exogenous and endogenous hydrophobic electrophiles. Involved in the detoxification of certain herbicides. Most active with substrates possessing a chloroacetamide structure. Trans-cinnamic acid and 1-chloro-2,4-dinitrobenzene are not effective substrates. May play an important role in the benoxacor-mediated protection of maize from metolachlor injury. In Zea mays (Maize), this protein is Glutathione S-transferase 4 (GST4).